A 350-amino-acid polypeptide reads, in one-letter code: Erythronate-4-phosphate dehydrogenase (350 aa).

Substrate contacts are provided by serine 45 and threonine 66. Residues 124–125 (QV), aspartate 144, 203–205 (ASR), and aspartate 226 contribute to the NAD(+) site. Arginine 205 is a catalytic residue. Glutamate 231 is an active-site residue. Histidine 248 (proton donor) is an active-site residue. Position 251 (glycine 251) interacts with NAD(+).

This sequence belongs to the D-isomer specific 2-hydroxyacid dehydrogenase family. PdxB subfamily. In terms of assembly, homodimer.

The protein resides in the cytoplasm. The enzyme catalyses 4-phospho-D-erythronate + NAD(+) = (R)-3-hydroxy-2-oxo-4-phosphooxybutanoate + NADH + H(+). It functions in the pathway cofactor biosynthesis; pyridoxine 5'-phosphate biosynthesis; pyridoxine 5'-phosphate from D-erythrose 4-phosphate: step 2/5. In terms of biological role, catalyzes the oxidation of erythronate-4-phosphate to 3-hydroxy-2-oxo-4-phosphonooxybutanoate. The polypeptide is Erythronate-4-phosphate dehydrogenase (Legionella pneumophila subsp. pneumophila (strain Philadelphia 1 / ATCC 33152 / DSM 7513)).